Here is a 98-residue protein sequence, read N- to C-terminus: Cystatin-B (98 aa).

Met1 carries the N-acetylmethionine modification. The short motif at 46–50 (QVVAG) is the Secondary area of contact element.

Belongs to the cystatin family. Able to form dimers stabilized by noncovalent forces.

It localises to the cytoplasm. Its subcellular location is the nucleus. Functionally, this is an intracellular thiol proteinase inhibitor. Tightly binding reversible inhibitor of cathepsins L, H and B. This chain is Cystatin-B (CSTB), found in Macaca fuscata fuscata (Japanese macaque).